The sequence spans 159 residues: Large ribosomal subunit protein uL22 (159 aa).

The tract at residues 129–159 is disordered; the sequence is VEGQQKAKMARQKAVTSVVKAPSKTQGGVQK.

It belongs to the universal ribosomal protein uL22 family. Part of the 50S ribosomal subunit.

In terms of biological role, this protein binds specifically to 23S rRNA; its binding is stimulated by other ribosomal proteins, e.g. L4, L17, and L20. It is important during the early stages of 50S assembly. It makes multiple contacts with different domains of the 23S rRNA in the assembled 50S subunit and ribosome. Its function is as follows. The globular domain of the protein is located near the polypeptide exit tunnel on the outside of the subunit, while an extended beta-hairpin is found that lines the wall of the exit tunnel in the center of the 70S ribosome. The chain is Large ribosomal subunit protein uL22 (rplV) from Mycoplasma pneumoniae (strain ATCC 29342 / M129 / Subtype 1) (Mycoplasmoides pneumoniae).